The following is a 515-amino-acid chain: Protein disulfide-isomerase (515 aa).

An N-terminal signal peptide occupies residues 1–20 (MRTFAPWILSLLGASAVASA). 2 Thioredoxin domains span residues 21-136 (ADAT…QSLP) and 343-470 (VLDD…ENGK). Residues Cys58, Cys61, Cys393, and Cys396 each act as nucleophile in the active site. 2 cysteine pairs are disulfide-bonded: Cys58-Cys61 and Cys393-Cys396. Composition is skewed to basic and acidic residues over residues 472–496 (KVDA…RAAS) and 506–515 (SDDKSEHDEL). Residues 472–515 (KVDALEVDPKKEQESGDATETRAASDETETPAATSDDKSEHDEL) form a disordered region. The Prevents secretion from ER motif lies at 512–515 (HDEL).

This sequence belongs to the protein disulfide isomerase family.

It is found in the endoplasmic reticulum lumen. The catalysed reaction is Catalyzes the rearrangement of -S-S- bonds in proteins.. Functionally, participates in the folding of proteins containing disulfide bonds, may be involved in glycosylation, prolyl hydroxylation and triglyceride transfer. The sequence is that of Protein disulfide-isomerase (pdiA) from Aspergillus oryzae (strain ATCC 42149 / RIB 40) (Yellow koji mold).